Reading from the N-terminus, the 372-residue chain is 3 beta-hydroxysteroid dehydrogenase/Delta 5--&gt;4-isomerase type 2 (372 aa).

Y154 functions as the Proton acceptor in the catalytic mechanism. K158 contacts NAD(+). The chain crosses the membrane as a helical span at residues 287–307 (LTLMYWIGFLLEVVSFLLSPI).

This sequence belongs to the 3-beta-HSD family. As to expression, expressed in adrenal gland, testis and ovary.

The protein localises to the endoplasmic reticulum membrane. It is found in the mitochondrion membrane. It catalyses the reaction a 3beta-hydroxy-Delta(5)-steroid + NAD(+) = a 3-oxo-Delta(5)-steroid + NADH + H(+). The enzyme catalyses a 3-oxo-Delta(5)-steroid = a 3-oxo-Delta(4)-steroid. It carries out the reaction pregnenolone + NAD(+) = pregn-5-ene-3,20-dione + NADH + H(+). The catalysed reaction is pregn-5-ene-3,20-dione = progesterone. It catalyses the reaction 3beta-hydroxyandrost-5-en-17-one + NAD(+) = androst-5-ene-3,17-dione + NADH + H(+). The enzyme catalyses androst-5-ene-3,17-dione = androst-4-ene-3,17-dione. It functions in the pathway lipid metabolism; steroid biosynthesis. Functionally, 3-beta-HSD is a bifunctional enzyme, that catalyzes the oxidative conversion of Delta(5)-ene-3-beta-hydroxy steroid, and the oxidative conversion of ketosteroids. The 3-beta-HSD enzymatic system plays a crucial role in the biosynthesis of all classes of hormonal steroids. The chain is 3 beta-hydroxysteroid dehydrogenase/Delta 5--&gt;4-isomerase type 2 from Homo sapiens (Human).